Reading from the N-terminus, the 94-residue chain is Putative septation protein SpoVG (94 aa).

It belongs to the SpoVG family.

Could be involved in septation. In Acetivibrio thermocellus (strain ATCC 27405 / DSM 1237 / JCM 9322 / NBRC 103400 / NCIMB 10682 / NRRL B-4536 / VPI 7372) (Clostridium thermocellum), this protein is Putative septation protein SpoVG.